A 479-amino-acid chain; its full sequence is Ubiquinone biosynthesis monooxygenase COQ6, mitochondrial (479 aa).

Belongs to the UbiH/COQ6 family. As to quaternary structure, component of a multi-subunit COQ enzyme complex, composed of at least COQ3, COQ4, COQ5, COQ6, COQ7 and COQ9. FAD is required as a cofactor.

It is found in the mitochondrion inner membrane. It carries out the reaction 4-hydroxy-3-(all-trans-decaprenyl)benzoate + 2 reduced [2Fe-2S]-[ferredoxin] + O2 + 2 H(+) = 3,4-dihydroxy-5-(all-trans-decaprenyl)benzoate + 2 oxidized [2Fe-2S]-[ferredoxin] + H2O. The enzyme catalyses 2-methoxy-6-(all-trans-decaprenyl)phenol + 2 reduced [2Fe-2S]-[ferredoxin] + O2 + 2 H(+) = 2-methoxy-6-(all-trans-decaprenyl)benzene-1,4-diol + 2 oxidized [2Fe-2S]-[ferredoxin] + H2O. It participates in cofactor biosynthesis; ubiquinone biosynthesis. FAD-dependent monooxygenase required for two non-consecutive steps during ubiquinone biosynthesis. Required for the C5-ring hydroxylation during ubiquinone biosynthesis by catalyzing the hydroxylation of 4-hydroxy-3-(all-trans-decaprenyl)benzoic acid to 3,4-dihydroxy-5-(all-trans-decaprenyl)benzoic acid. Also acts downstream of COQ4, for the C1-hydroxylation during ubiquinone biosynthesis by catalyzing the hydroxylation of 2-methoxy-6-(all-trans-decaprenyl)phenol to 2-methoxy-6-(all-trans-decaprenyl)benzene-1,4-diol. The electrons required for the hydroxylation reaction are funneled indirectly to coq6 from NADPH via a ferredoxin/ferredoxin reductase system. In Schizosaccharomyces pombe (strain 972 / ATCC 24843) (Fission yeast), this protein is Ubiquinone biosynthesis monooxygenase COQ6, mitochondrial.